The following is a 273-amino-acid chain: MQDLQKIIDDAFENRANLSPSAAPAAVRDAVASVIAGLDAGRLRVAEKIDGNWTVNQWIKKAVLISFRLADNEVMAGGTNQYFDKVPTKFGDYTPEQFREGGFRVVPPAVARRGSFIGRNVVLMPSYVNIGAYVDEGTMVDTWATVGSCAQIGKNVHLSGGVGIGGVLEPVQAGPVIIEDNVFVGARSEVVEGVIIEENAVLSMGVYIGQSTKIYDRATGEVTYGRVPSGAVVVPGSLPSADGKYSLYCAVIVKRVDAQTRAKTGINELLRGA.

Arginine 104 and aspartate 141 together coordinate substrate.

This sequence belongs to the transferase hexapeptide repeat family. As to quaternary structure, homotrimer.

The protein localises to the cytoplasm. It carries out the reaction (S)-2,3,4,5-tetrahydrodipicolinate + succinyl-CoA + H2O = (S)-2-succinylamino-6-oxoheptanedioate + CoA. The protein operates within amino-acid biosynthesis; L-lysine biosynthesis via DAP pathway; LL-2,6-diaminopimelate from (S)-tetrahydrodipicolinate (succinylase route): step 1/3. The chain is 2,3,4,5-tetrahydropyridine-2,6-dicarboxylate N-succinyltransferase from Aromatoleum aromaticum (strain DSM 19018 / LMG 30748 / EbN1) (Azoarcus sp. (strain EbN1)).